Reading from the N-terminus, the 339-residue chain is Nicotinate-nucleotide--dimethylbenzimidazole phosphoribosyltransferase (339 aa).

Catalysis depends on Glu-306, which acts as the Proton acceptor.

This sequence belongs to the CobT family.

It catalyses the reaction 5,6-dimethylbenzimidazole + nicotinate beta-D-ribonucleotide = alpha-ribazole 5'-phosphate + nicotinate + H(+). It participates in nucleoside biosynthesis; alpha-ribazole biosynthesis; alpha-ribazole from 5,6-dimethylbenzimidazole: step 1/2. In terms of biological role, catalyzes the synthesis of alpha-ribazole-5'-phosphate from nicotinate mononucleotide (NAMN) and 5,6-dimethylbenzimidazole (DMB). This chain is Nicotinate-nucleotide--dimethylbenzimidazole phosphoribosyltransferase, found in Brucella melitensis biotype 2 (strain ATCC 23457).